We begin with the raw amino-acid sequence, 303 residues long: Dihydroorotate dehydrogenase B (NAD(+)), catalytic subunit (303 aa).

FMN-binding positions include Ser-21 and 45 to 46; that span reads KG. Residues Lys-45 and 69 to 73 contribute to the substrate site; that span reads NCIGL. The FMN site is built by Asn-98 and Asn-126. Asn-126 contacts substrate. Cys-129 (nucleophile) is an active-site residue. Residues Lys-165 and Val-191 each contribute to the FMN site. 192–193 contacts substrate; it reads NT. FMN is bound by residues Gly-217 and 243 to 244; that span reads GG.

Belongs to the dihydroorotate dehydrogenase family. Type 1 subfamily. As to quaternary structure, heterotetramer of 2 PyrK and 2 PyrD type B subunits. Requires FMN as cofactor.

Its subcellular location is the cytoplasm. It carries out the reaction (S)-dihydroorotate + NAD(+) = orotate + NADH + H(+). It functions in the pathway pyrimidine metabolism; UMP biosynthesis via de novo pathway; orotate from (S)-dihydroorotate (NAD(+) route): step 1/1. Catalyzes the conversion of dihydroorotate to orotate with NAD(+) as electron acceptor. This Brachyspira hyodysenteriae (strain ATCC 49526 / WA1) protein is Dihydroorotate dehydrogenase B (NAD(+)), catalytic subunit (pyrD).